The sequence spans 684 residues: Glycine--tRNA ligase beta subunit (684 aa).

It belongs to the class-II aminoacyl-tRNA synthetase family. As to quaternary structure, tetramer of two alpha and two beta subunits.

The protein localises to the cytoplasm. It catalyses the reaction tRNA(Gly) + glycine + ATP = glycyl-tRNA(Gly) + AMP + diphosphate. The protein is Glycine--tRNA ligase beta subunit of Pseudomonas fluorescens (strain ATCC BAA-477 / NRRL B-23932 / Pf-5).